The following is a 547-amino-acid chain: uncharacterized protein (547 aa).

The Cytoplasmic segment spans residues 1-19; it reads MVRLNHAASYFMPIFCSTR. Residues 20-40 form a helical membrane-spanning segment; it reads PHIVILSALFSISLFSLFYAS. The Vacuolar segment spans residues 41 to 64; the sequence is SELLLHQYDDPLMFKPNSQDYFRT. A helical membrane pass occupies residues 65–85; it reads FLLGLFSPFLYYFLKTFLFNI. The Cytoplasmic segment spans residues 86-89; sequence NQRF. Residues 90 to 110 traverse the membrane as a helical segment; that stretch reads LILNLIVDFPINDVFMLLILI. The Vacuolar segment spans residues 111-139; it reads GLAYPQVQDHEGGTIKHKECSWHIIPRQA. A helical transmembrane segment spans residues 140–160; that stretch reads YIFGISWALGEFTICIIGNLF. Residues 161–340 are Cytoplasmic-facing; the sequence is NYQEIADPNI…RFIAFSTAYQ (180 aa). Residue S225 is modified to Phosphoserine. Residues 237-271 form a disordered region; sequence PIKPLRSSSSTYGSIRQQPHENKKQLHVPDNSQDD. Residues 242 to 253 show a composition bias toward polar residues; that stretch reads RSSSSTYGSIRQ. Residues 341–361 form a helical membrane-spanning segment; that stretch reads LVTGLLLMILVVGSNIMLTIG. Residues 362-394 lie on the Vacuolar side of the membrane; sequence ESLILSMYFVYVRGHEGLFTPVVNYFGSRTISN. A helical transmembrane segment spans residues 395–415; the sequence is FILCVIIPFISLNFLINTSIY. Residues 416 to 523 lie on the Cytoplasmic side of the membrane; it reads LRRELDDWFN…NWRALARNDS (108 aa). Residues 524 to 544 traverse the membrane as a helical segment; sequence FVLGVMVSWSLLVFVTGILST. Over 545-547 the chain is Vacuolar; the sequence is VYI.

It is found in the vacuole membrane. This is an uncharacterized protein from Saccharomyces cerevisiae (strain ATCC 204508 / S288c) (Baker's yeast).